We begin with the raw amino-acid sequence, 1099 residues long: ATP-dependent helicase/deoxyribonuclease subunit B (1099 aa).

Residues cysteine 766, cysteine 1056, cysteine 1059, and cysteine 1065 each contribute to the [4Fe-4S] cluster site.

Belongs to the helicase family. AddB/RexB type 2 subfamily. Heterodimer of AddA and RexB. Requires Mg(2+) as cofactor. [4Fe-4S] cluster is required as a cofactor.

Functionally, the heterodimer acts as both an ATP-dependent DNA helicase and an ATP-dependent, dual-direction single-stranded exonuclease. Recognizes the chi site generating a DNA molecule suitable for the initiation of homologous recombination. This subunit has 5' -&gt; 3' nuclease activity but not helicase activity. The sequence is that of ATP-dependent helicase/deoxyribonuclease subunit B from Lactococcus lactis subsp. lactis (strain IL1403) (Streptococcus lactis).